A 70-amino-acid polypeptide reads, in one-letter code: Large ribosomal subunit protein bL31 (70 aa).

Zn(2+) contacts are provided by C16, C18, C37, and C40.

Belongs to the bacterial ribosomal protein bL31 family. Type A subfamily. In terms of assembly, part of the 50S ribosomal subunit. The cofactor is Zn(2+).

In terms of biological role, binds the 23S rRNA. This is Large ribosomal subunit protein bL31 from Shewanella woodyi (strain ATCC 51908 / MS32).